The chain runs to 119 residues: Protein TusC (119 aa).

Belongs to the DsrF/TusC family. In terms of assembly, heterohexamer, formed by a dimer of trimers. The hexameric TusBCD complex contains 2 copies each of TusB, TusC and TusD. The TusBCD complex interacts with TusE.

The protein localises to the cytoplasm. In terms of biological role, part of a sulfur-relay system required for 2-thiolation of 5-methylaminomethyl-2-thiouridine (mnm(5)s(2)U) at tRNA wobble positions. The chain is Protein TusC from Klebsiella pneumoniae subsp. pneumoniae (strain ATCC 700721 / MGH 78578).